We begin with the raw amino-acid sequence, 133 residues long: Putative nickel-responsive regulator (133 aa).

4 residues coordinate Ni(2+): histidine 74, histidine 85, histidine 87, and cysteine 93.

It belongs to the transcriptional regulatory CopG/NikR family. Ni(2+) serves as cofactor.

Transcriptional regulator. The sequence is that of Putative nickel-responsive regulator from Saccharolobus solfataricus (strain ATCC 35092 / DSM 1617 / JCM 11322 / P2) (Sulfolobus solfataricus).